The sequence spans 172 residues: 3-phenylpropionate/cinnamic acid dioxygenase subunit beta (172 aa).

The protein belongs to the bacterial ring-hydroxylating dioxygenase beta subunit family. In terms of assembly, this dioxygenase system consists of four proteins: the two subunits of the hydroxylase component (HcaE and HcaF), a ferredoxin (HcaC) and a ferredoxin reductase (HcaD).

It carries out the reaction 3-phenylpropanoate + NADH + O2 + H(+) = 3-(cis-5,6-dihydroxycyclohexa-1,3-dien-1-yl)propanoate + NAD(+). The catalysed reaction is (E)-cinnamate + NADH + O2 + H(+) = (2E)-3-(cis-5,6-dihydroxycyclohexa-1,3-dien-1-yl)prop-2-enoate + NAD(+). The protein operates within aromatic compound metabolism; 3-phenylpropanoate degradation. Part of the multicomponent 3-phenylpropionate dioxygenase. Converts 3-phenylpropionic acid (PP) and cinnamic acid (CI) into 3-phenylpropionate-dihydrodiol (PP-dihydrodiol) and cinnamic acid-dihydrodiol (CI-dihydrodiol), respectively. This chain is 3-phenylpropionate/cinnamic acid dioxygenase subunit beta, found in Shigella sonnei (strain Ss046).